The following is a 322-amino-acid chain: Succinate/fumarate mitochondrial transporter (322 aa).

Solcar repeat units follow at residues 8–99, 111–202, and 212–303; these read SHPA…YRTL, GNTF…LKEF, and LPSW…VREH. The next 6 membrane-spanning stretches (helical) occupy residues 11-31, 68-88, 114-134, 177-193, 219-235, and 278-295; these read AINL…CHPL, FLAL…KMAI, FVAG…PMEV, GVSL…GANF, CIGL…NAPL, and GITP…VTFT.

The protein belongs to the mitochondrial carrier (TC 2.A.29) family.

The protein localises to the mitochondrion inner membrane. Its function is as follows. Transports cytoplasmic succinate, derived from isocitrate by the action of isocitrate lyase in the cytosol, into the mitochondrial matrix in exchange for fumarate. This chain is Succinate/fumarate mitochondrial transporter (SFC1), found in Saccharomyces cerevisiae (strain ATCC 204508 / S288c) (Baker's yeast).